A 366-amino-acid polypeptide reads, in one-letter code: Glucose 1-dehydrogenase (366 aa).

Position 39 (C39) interacts with Zn(2+). T41 lines the substrate pocket. 2 residues coordinate Zn(2+): H66 and E67. Position 89 (N89) interacts with substrate. Zn(2+)-binding residues include C93, C96, C99, and C107. Substrate contacts are provided by E114, Q150, and D154. Q150 contacts Zn(2+). NADP(+) contacts are provided by residues 189–192, 211–213, 277–279, 305–307, and K354; these read TGPI, NRR, FGF, and LVN. N307 contributes to the substrate binding site.

Belongs to the zinc-containing alcohol dehydrogenase family. Glucose 1-dehydrogenase subfamily. Homotetramer. The cofactor is Zn(2+).

The enzyme catalyses D-glucose + NAD(+) = D-glucono-1,5-lactone + NADH + H(+). It catalyses the reaction D-glucose + NADP(+) = D-glucono-1,5-lactone + NADPH + H(+). It carries out the reaction D-galactose + NAD(+) = D-galactono-1,4-lactone + NADH + H(+). The catalysed reaction is D-galactose + NADP(+) = D-galactono-1,5-lactone + NADPH + H(+). The enzyme catalyses an aldopyranose + NAD(+) = aldono-1,5-lactone + NADH + H(+). It catalyses the reaction an aldopyranose + NADP(+) = aldono-1,5-lactone + NADPH + H(+). With respect to regulation, inhibited by EDTA in vitro. Functionally, catalyzes the NAD(P)(+)-dependent oxidation of D-glucose to D-gluconate via gluconolactone. Displays broad substrate specificity since it is able to catalyze the oxidation of a number of alternative aldose sugars, such as D-galactose, D-xylose and L-arabinose, to the corresponding glyconate. Can utilize both NAD(+) and NADP(+) as electron acceptor. Physiologically, seems to be involved in the degradation of both glucose and galactose through a non-phosphorylative variant of the Entner-Doudoroff pathway. The protein is Glucose 1-dehydrogenase of Saccharolobus solfataricus (Sulfolobus solfataricus).